Consider the following 239-residue polypeptide: Sensory rhodopsin-1 (239 aa).

Topologically, residues 1–3 (MDA) are extracellular. A helical transmembrane segment spans residues 4 to 25 (VATAYLGGAVALIVGVAFVWLL). Residues 26 to 34 (YRSLDGSPH) lie on the Cytoplasmic side of the membrane. A helical membrane pass occupies residues 35–56 (QSALAPLAIIPVFAGLSYVGMA). At 57–70 (YDIGTVIVNGNQIV) the chain is on the extracellular side. A helical transmembrane segment spans residues 71–92 (GLRYIDWLVTTPILVGYVGYAA). Residues 93–95 (GAS) lie on the Cytoplasmic side of the membrane. The chain crosses the membrane as a helical span at residues 96–118 (RRSIIGVMVADALMIAVGAGAVV). The Extracellular segment spans residues 119-122 (TDGT). Residues 123 to 150 (LKWALFGVSSIFHLSLFAYLYVIFPRVV) traverse the membrane as a helical segment. Residues 151–153 (PDV) are Cytoplasmic-facing. Residues 154–181 (PEQIGLFNLLKNHIGLLWLAYPLVWLFG) form a helical membrane-spanning segment. Residues 182-189 (PAGIGEAT) lie on the Extracellular side of the membrane. Residues 190–222 (AAGVALTYVFLDVLAKVPYVYFFYARRRVFMHS) traverse the membrane as a helical segment. Lys205 bears the N6-(retinylidene)lysine mark. Over 223–239 (ESPPAPEQATVEATAAD) the chain is Cytoplasmic.

The protein belongs to the archaeal/bacterial/fungal opsin family. In terms of assembly, interacts with HTR-I.

It is found in the cell membrane. In terms of biological role, involved in the control of phototaxis. Mediates both photoattractant (in the orange light) and photophobic (in the near UV light) responses. The signal is then transmitted to the sensory rhodopsin I transducer (HTR-I). This Halobacterium salinarum (strain ATCC 29341 / DSM 671 / R1) protein is Sensory rhodopsin-1 (sopI).